The sequence spans 235 residues: Large ribosomal subunit protein uL1 (235 aa).

The protein belongs to the universal ribosomal protein uL1 family. As to quaternary structure, part of the 50S ribosomal subunit.

Binds directly to 23S rRNA. The L1 stalk is quite mobile in the ribosome, and is involved in E site tRNA release. In terms of biological role, protein L1 is also a translational repressor protein, it controls the translation of the L11 operon by binding to its mRNA. The sequence is that of Large ribosomal subunit protein uL1 from Citrobacter koseri (strain ATCC BAA-895 / CDC 4225-83 / SGSC4696).